Here is a 67-residue protein sequence, read N- to C-terminus: Surface composition regulator (67 aa).

Belongs to the GlgS family.

In terms of biological role, major determinant of cell surface composition. Negatively regulates motility, adhesion and synthesis of biofilm exopolysaccharides. The chain is Surface composition regulator from Salmonella enteritidis PT4 (strain P125109).